Reading from the N-terminus, the 443-residue chain is Xaa-Pro dipeptidase (443 aa).

Residues Asp246, Asp257, His339, Glu384, and Glu423 each coordinate Mn(2+).

This sequence belongs to the peptidase M24B family. Bacterial-type prolidase subfamily. The cofactor is Mn(2+).

The catalysed reaction is Xaa-L-Pro dipeptide + H2O = an L-alpha-amino acid + L-proline. Functionally, splits dipeptides with a prolyl residue in the C-terminal position. The chain is Xaa-Pro dipeptidase from Escherichia coli O7:K1 (strain IAI39 / ExPEC).